The primary structure comprises 905 residues: Protein translocase subunit SecA (905 aa).

Residues Gln-87, 105-109, and Asp-512 contribute to the ATP site; that span reads GEGKT. The interval 836–905 is disordered; the sequence is DVDAVDEQRK…KKYKHCHGKL (70 aa). Basic and acidic residues predominate over residues 841–858; the sequence is DEQRKAADSAPREFRHEQ. Positions 890, 892, 901, and 902 each coordinate Zn(2+). The segment covering 896–905 has biased composition (basic residues); sequence KKYKHCHGKL.

The protein belongs to the SecA family. Monomer and homodimer. Part of the essential Sec protein translocation apparatus which comprises SecA, SecYEG and auxiliary proteins SecDF-YajC and YidC. Zn(2+) is required as a cofactor.

It localises to the cell inner membrane. It is found in the cytoplasm. The enzyme catalyses ATP + H2O + cellular proteinSide 1 = ADP + phosphate + cellular proteinSide 2.. Functionally, part of the Sec protein translocase complex. Interacts with the SecYEG preprotein conducting channel. Has a central role in coupling the hydrolysis of ATP to the transfer of proteins into and across the cell membrane, serving both as a receptor for the preprotein-SecB complex and as an ATP-driven molecular motor driving the stepwise translocation of polypeptide chains across the membrane. This is Protein translocase subunit SecA from Idiomarina loihiensis (strain ATCC BAA-735 / DSM 15497 / L2-TR).